The following is a 274-amino-acid chain: Aquaporin C (274 aa).

Topologically, residues Met-1 to Gln-33 are cytoplasmic. A helical membrane pass occupies residues Leu-34–Ala-54. Residues Ala-55–Val-66 are Extracellular-facing. The helical transmembrane segment at Cys-67–Ile-87 threads the bilayer. At Ser-88 to Arg-105 the chain is on the cytoplasmic side. The short motif at Asn-93–Ala-95 is the NPA 1 element. The helical transmembrane segment at Met-106–Ala-126 threads the bilayer. Residues Gly-127–Arg-154 lie on the Extracellular side of the membrane. Residues Gly-155–Val-175 form a helical membrane-spanning segment. Residues Tyr-176 to Arg-185 are Cytoplasmic-facing. Residues Val-186–Thr-206 traverse the membrane as a helical segment. The Extracellular segment spans residues Gly-207–Tyr-229. The NPA 2 signature appears at Asn-211–Ala-213. A helical transmembrane segment spans residues Ile-230–Leu-250. Over Ser-251 to Lys-274 the chain is Cytoplasmic.

It belongs to the MIP/aquaporin (TC 1.A.8) family.

It is found in the cell membrane. May form a water-specific channel. This is Aquaporin C (wacA) from Dictyostelium discoideum (Social amoeba).